A 358-amino-acid chain; its full sequence is MYKYKVIMTGGGTAGHVTPNLALVPALKENGFEVKYIGSKDGIEKEIIKNNNIPYFQISSGKLRRYFDLKNFSDPFKVLKGIKDANKILKKEKPDVVFSKGGFVAVPVVIAAHLRKIPVVAHESDMTPGLANKLSAPFCSKLCVTFRESLKYIKDNKGVLTGSPIRTEILNGSKEKGLEICNFNKSKEVILIMGGSLGSKIINDEIRGNLELLLKDFNIIHICGKGNLDNNLLDKVGYKQFEYVSEELPDLMSAADYIISRAGANSIFEFLALRKPMLLIPLSKKASRGDQILNANSFKNEGYALVLNEEELINSTLYNKILELKSNKKNIINAMNNMNGKNSIDLIIEVILKSIKEY.

Residues 13-15 (TAG), Arg166, Ser196, and Gln291 contribute to the UDP-N-acetyl-alpha-D-glucosamine site.

Belongs to the glycosyltransferase 28 family. MurG subfamily.

It localises to the cell membrane. It carries out the reaction di-trans,octa-cis-undecaprenyl diphospho-N-acetyl-alpha-D-muramoyl-L-alanyl-D-glutamyl-meso-2,6-diaminopimeloyl-D-alanyl-D-alanine + UDP-N-acetyl-alpha-D-glucosamine = di-trans,octa-cis-undecaprenyl diphospho-[N-acetyl-alpha-D-glucosaminyl-(1-&gt;4)]-N-acetyl-alpha-D-muramoyl-L-alanyl-D-glutamyl-meso-2,6-diaminopimeloyl-D-alanyl-D-alanine + UDP + H(+). Its pathway is cell wall biogenesis; peptidoglycan biosynthesis. In terms of biological role, cell wall formation. Catalyzes the transfer of a GlcNAc subunit on undecaprenyl-pyrophosphoryl-MurNAc-pentapeptide (lipid intermediate I) to form undecaprenyl-pyrophosphoryl-MurNAc-(pentapeptide)GlcNAc (lipid intermediate II). The sequence is that of UDP-N-acetylglucosamine--N-acetylmuramyl-(pentapeptide) pyrophosphoryl-undecaprenol N-acetylglucosamine transferase from Clostridium botulinum (strain Alaska E43 / Type E3).